Reading from the N-terminus, the 137-residue chain is Large ribosomal subunit protein uL16 (137 aa).

It belongs to the universal ribosomal protein uL16 family. As to quaternary structure, part of the 50S ribosomal subunit.

Its function is as follows. Binds 23S rRNA and is also seen to make contacts with the A and possibly P site tRNAs. The sequence is that of Large ribosomal subunit protein uL16 from Xanthomonas axonopodis pv. citri (strain 306).